The chain runs to 613 residues: MARCRHHSGYLADDEASHSMCSARVQLPKKPLVPEMRPACKPGRVPHPPSTCGSSALQGQRRNKRHPQPFGHFLDFLTESQVLDSLETVVEKATERMAAMKTEAGVPLVEVQDPVEVPSGGRRAHARPSLSTVHRHRVRPTLCTGHPNNYPSSSSSMSNCHSSLMAGCLGSHSRDSDLGAQGSLPPVRDKLLLEKNLKRLLQLEREGKGLSQSCSQRDSLLWDSLGSQTSFQWTQEQPLSWFSGLLGSSSGVPEASEPRPGEQEPIFRKREFNKEIKSLLSQLESLDLPGYCPLREPHRTLNFLADHRLFPALQSVVSQAVDKLRGAHCRDGRPLFPTSLEPTSDLPPLGSEPAKPTNGGQPYASPRPTVSSPKMLQRKRKDRGGSPSMSSAQVATRFKLKSPCSSSRFTKKKPLPSISSKSSMSHFSNRLYEELADFLTQQAASLVIRKYEFEKDLSKQLGFFSFPITHVLRDLSLGLKKVKGSRIHLSSETHRSCLLRKLEESKRARQASRLSTSHCSTETPSVQQEPATHTAQDQATEPCRSLYTNLPASRQLSPLEPKLYMSACTGMGSSPPKSKDMDNEGRDKAEIEDEDEDEFKDEDQDEDKDEDGV.

Positions 41-68 (KPGRVPHPPSTCGSSALQGQRRNKRHPQ) are disordered. The span at 51 to 60 (TCGSSALQGQ) shows a compositional bias: polar residues. A coiled-coil region spans residues 79–104 (ESQVLDSLETVVEKATERMAAMKTEA). Disordered stretches follow at residues 329 to 395 (CRDG…AQVA), 509 to 541 (RQASRLSTSHCSTETPSVQQEPATHTAQDQATE), and 565 to 613 (MSAC…EDGV). Ser386 carries the phosphoserine modification. Positions 512–539 (SRLSTSHCSTETPSVQQEPATHTAQDQA) are enriched in polar residues. Over residues 577 to 589 (KSKDMDNEGRDKA) the composition is skewed to basic and acidic residues. Over residues 590–613 (EIEDEDEDEFKDEDQDEDKDEDGV) the composition is skewed to acidic residues.

It localises to the cytoplasm. The protein resides in the cytoskeleton. The protein localises to the microtubule organizing center. Its subcellular location is the centrosome. The protein is Coiled-coil domain-containing protein 116 (CCDC116) of Homo sapiens (Human).